We begin with the raw amino-acid sequence, 299 residues long: Putative zinc-binding protein ORF12 (299 aa).

The polypeptide is Putative zinc-binding protein ORF12 (ORF12) (Ictaluridae (bullhead catfishes)).